Here is a 1435-residue protein sequence, read N- to C-terminus: Nitric oxide synthase 1 (1435 aa).

An interaction with NOSIP region spans residues 1–206 (MEEHVFGVQQ…LQGSGDKNEL (206 aa)). The 83-residue stretch at 17 to 99 (SVRLFKRKVG…ETHVVLILRG (83 aa)) folds into the PDZ domain. 2 disordered regions span residues 110–201 (TFTG…QGSG) and 277–304 (NNPYSEKEQPPASGKQSPTKNGSPSKCP). The interval 164 to 246 (QGHGQEAGSP…TGVQVDRDFD (83 aa)) is interaction with DYNLL1/PIN. Residues 290-300 (GKQSPTKNGSP) are compositionally biased toward polar residues. Ser340 is a binding site for (6R)-L-erythro-5,6,7,8-tetrahydrobiopterin. Position 421 (Cys421) interacts with heme b. Residues Gln484, Trp593, Tyr594, and Glu598 each coordinate L-arginine. (6R)-L-erythro-5,6,7,8-tetrahydrobiopterin-binding residues include Val683, Trp684, and Phe697. Heme b is bound at residue Tyr712. A calmodulin-binding region spans residues 731-751 (KRRAIGFKKLAEAVKFSAKLM). The Flavodoxin-like domain maps to 761 to 941 (ATILYATETG…AFRTWAKKVF (181 aa)). Thr767, Glu768, Thr769, Lys771, Ser772, Ser813, Thr814, and Gly818 together coordinate FMN. Residues Ser853, Ser863, and Ser864 each carry the phosphoserine modification. FMN contacts are provided by Ser892, His897, Cys899, Glu925, and Gln929. An FAD-binding FR-type domain is found at 996–1243 (KRVSAARLLS…VRGAPSFRLP (248 aa)). Position 1016 (Arg1016) interacts with NADP(+). 7 residues coordinate FAD: His1038, Arg1179, Tyr1180, Tyr1181, Ser1182, Thr1197, and Ala1199. Ser1202 is an NADP(+) binding site. FAD-binding residues include Tyr1203, Val1216, Cys1217, and Ser1218. Positions 1257, 1290, 1319, 1320, 1326, 1328, 1330, 1363, 1404, and 1406 each coordinate NADP(+).

This sequence belongs to the NOS family. In terms of assembly, homodimer. Interacts with DLG4; the interaction possibly being prevented by the association between NOS1 and CAPON. Forms a ternary complex with CAPON and RASD1. Forms a ternary complex with CAPON and SYN1. Interacts with ZDHHC23. Interacts with NOSIP; which may impair its synaptic location. Interacts with HTR4. Interacts with SLC6A4. Interacts with VAC14. Interacts (via N-terminal domain) with DLG4 (via N-terminal tandem pair of PDZ domains). Interacts with SLC6A4. Forms a complex with ASL, ASS1 and SLC7A1; the complex regulates cell-autonomous L-arginine synthesis and citrulline recycling while channeling extracellular L-arginine to nitric oxide synthesis pathway. Interacts with DMD; localizes NOS1 to sarcolemma in muscle cells. Interacts with DYNLL1; inhibits the nitric oxide synthase activity. Heme b is required as a cofactor. The cofactor is FAD. It depends on FMN as a cofactor. Requires (6R)-L-erythro-5,6,7,8-tetrahydrobiopterin as cofactor. Ubiquitinated; mediated by STUB1/CHIP in the presence of Hsp70 and Hsp40 (in vitro).

Its subcellular location is the cell membrane. The protein localises to the sarcolemma. The protein resides in the cell projection. It localises to the dendritic spine. The enzyme catalyses 2 L-arginine + 3 NADPH + 4 O2 + H(+) = 2 L-citrulline + 2 nitric oxide + 3 NADP(+) + 4 H2O. Stimulated by calcium/calmodulin. Inhibited by DYNLL1 that prevents the dimerization of the protein. Inhibited by NOSIP. Functionally, produces nitric oxide (NO) which is a messenger molecule with diverse functions throughout the body. In the brain and peripheral nervous system, NO displays many properties of a neurotransmitter. Probably has nitrosylase activity and mediates cysteine S-nitrosylation of cytoplasmic target proteins such SRR. In Oryctolagus cuniculus (Rabbit), this protein is Nitric oxide synthase 1 (NOS1).